We begin with the raw amino-acid sequence, 314 residues long: GDSL-like esterase Rv1075c (314 aa).

The signal sequence occupies residues 1–21; that stretch reads MPRRSTIALATAGALASTGTA. Serine 80 acts as the Nucleophile in catalysis. Aspartate 244 (proton donor) is an active-site residue. Catalysis depends on histidine 247, which acts as the Proton acceptor. Positions 276-314 are disordered; the sequence is IHETPSRPGTATLEPGHTRHSMMSRLRRPRPARAVPTGG. Residues 293 to 306 show a composition bias toward basic residues; that stretch reads TRHSMMSRLRRPRP.

The protein belongs to the 'GDSL' lipolytic enzyme family.

The enzyme catalyses an acetyl ester + H2O = an aliphatic alcohol + acetate + H(+). The catalysed reaction is a butanoate ester + H2O = an aliphatic alcohol + butanoate + H(+). It carries out the reaction triacetin + H2O = diacetylglycerol + acetate + H(+). It catalyses the reaction 1,2,3-tributanoylglycerol + H2O = dibutanoylglycerol + butanoate + H(+). Its activity is regulated as follows. Esterase activity is significantly inhibited by the serine modifier phenylmethylsulfonyl fluoride (PMSF). Completely inhibited by diethyl pyrocarbonate. In terms of biological role, esterase that preferentially hydrolyzes short-chain fatty acids, particularly pNP-acetate (C2) and pNP-butyrate (C4). Also has weak activity with pNP-hexanoate (C6) and pNP-octanoate (C8). It can also hydrolyze short-chain tryglycerides such as triacetin and tributyrin. Important for intracellular survival. The chain is GDSL-like esterase Rv1075c from Mycobacterium tuberculosis (strain ATCC 25618 / H37Rv).